The sequence spans 406 residues: Protein IWS1 homolog 2 (406 aa).

Disordered stretches follow at residues 1–28 (MQELDSSNDEWVKELEGENEESKFTGRR) and 41–89 (DEVE…SEEV). Residues 10–24 (EWVKELEGENEESKF) show a composition bias toward basic and acidic residues. Acidic residues predominate over residues 41–56 (DEVEEDLDDFTEPADD). Residues 69-78 (KKDESGLEKT) are compositionally biased toward basic and acidic residues. The 84-residue stretch at 201–284 (NLLKNWLEPL…NKWGRIIYNK (84 aa)) folds into the TFIIS N-terminal domain.

Belongs to the IWS1 family.

The protein resides in the nucleus. In terms of biological role, transcription factor involved in RNA polymerase II (RNAPII) transcription regulation. Involved in transcription elongation. May function at post-recruitment and elongation steps of transcription. This is Protein IWS1 homolog 2 from Arabidopsis thaliana (Mouse-ear cress).